A 310-amino-acid polypeptide reads, in one-letter code: HTH-type transcriptional activator TtdR (310 aa).

Residues 6–63 (PLAKDLQVLVEIVHSGSFSAAAATLGQTPAFVTKRIQILENTLATTLLNRSARGVALT) form the HTH lysR-type domain. The H-T-H motif DNA-binding region spans 23 to 42 (FSAAAATLGQTPAFVTKRIQ).

It belongs to the LysR transcriptional regulatory family.

Positive regulator required for L-tartrate-dependent anaerobic growth on glycerol. Induces expression of the ttdA-ttdB-ygjE operon. The chain is HTH-type transcriptional activator TtdR (ttdR) from Escherichia coli O6:K15:H31 (strain 536 / UPEC).